A 307-amino-acid chain; its full sequence is Urease accessory protein UreD (307 aa).

It belongs to the UreD family. UreD, UreF and UreG form a complex that acts as a GTP-hydrolysis-dependent molecular chaperone, activating the urease apoprotein by helping to assemble the nickel containing metallocenter of UreC. The UreE protein probably delivers the nickel.

It localises to the cytoplasm. Its function is as follows. Required for maturation of urease via the functional incorporation of the urease nickel metallocenter. The polypeptide is Urease accessory protein UreD (Prochlorococcus marinus (strain NATL2A)).